Here is an 809-residue protein sequence, read N- to C-terminus: Protein TRC8 homolog (809 aa).

Helical transmembrane passes span 124-144 (TVKF…FMLW), 147-167 (HLVM…SYWS), 200-220 (VMSL…FAYI), 233-253 (MPII…AKVV), 256-276 (LPVV…MQSA), 350-370 (LVDG…ISMF), 392-412 (LGTV…LTSL), 425-445 (LCLL…PILM), 461-481 (ALSV…HLWS), 488-508 (WLLA…VSLA), and 539-559 (SVEF…LIFE). An RING-type; atypical zinc finger spans residues 621 to 659 (CAICYQEMYSAKITRCRHFFHGVCLRKWLYVQDRCPLCH). Disordered regions lie at residues 696–724 (NNAA…SSSA) and 752–788 (VASS…TSAA). Residues 711–724 (EASEQAPATSSSSA) are compositionally biased toward low complexity.

Interacts with VHL. Interacts with the MPN domain of CSN5. Interacts with EIF3F and EIF3H.

The protein resides in the endoplasmic reticulum membrane. Its function is as follows. Plays a role in growth inhibition that is dependent upon COP9 signalosome subunits CSN5 and CSN6. May modulate signalosome levels or compartmentalization. Probably functions in the same or a related pathway to VHL during early midline development. The polypeptide is Protein TRC8 homolog (Drosophila melanogaster (Fruit fly)).